The chain runs to 336 residues: Methionyl-tRNA formyltransferase (336 aa).

Residue 112-115 (SILP) participates in (6S)-5,6,7,8-tetrahydrofolate binding.

It belongs to the Fmt family.

The enzyme catalyses L-methionyl-tRNA(fMet) + (6R)-10-formyltetrahydrofolate = N-formyl-L-methionyl-tRNA(fMet) + (6S)-5,6,7,8-tetrahydrofolate + H(+). Functionally, attaches a formyl group to the free amino group of methionyl-tRNA(fMet). The formyl group appears to play a dual role in the initiator identity of N-formylmethionyl-tRNA by promoting its recognition by IF2 and preventing the misappropriation of this tRNA by the elongation apparatus. The protein is Methionyl-tRNA formyltransferase of Trichodesmium erythraeum (strain IMS101).